A 284-amino-acid polypeptide reads, in one-letter code: Bifunctional protein FolD (284 aa).

NADP(+)-binding positions include 165–167 (GRS), serine 190, and isoleucine 231.

The protein belongs to the tetrahydrofolate dehydrogenase/cyclohydrolase family. Homodimer.

The enzyme catalyses (6R)-5,10-methylene-5,6,7,8-tetrahydrofolate + NADP(+) = (6R)-5,10-methenyltetrahydrofolate + NADPH. It catalyses the reaction (6R)-5,10-methenyltetrahydrofolate + H2O = (6R)-10-formyltetrahydrofolate + H(+). Its pathway is one-carbon metabolism; tetrahydrofolate interconversion. Catalyzes the oxidation of 5,10-methylenetetrahydrofolate to 5,10-methenyltetrahydrofolate and then the hydrolysis of 5,10-methenyltetrahydrofolate to 10-formyltetrahydrofolate. The protein is Bifunctional protein FolD of Lysinibacillus sphaericus (strain C3-41).